Reading from the N-terminus, the 543-residue chain is MTFAELVDRVGSKGPFQLLHTVLLGLPILGMANHNLLQIFTAPTPAHHCRPPPNASAGPWVLPTGLNGKPETCLRFVYPPNASLPNDTRGATEPCLDGWIYNIVDRDSIVTEWDLVCSSSKLKEMAQSVFMAGILVGGLVLGALSDRFGRKPILIFSYLLLGASGSGAAFSPTFSIYAVFRFLCGFSISGISLSTAILNVEWVSTRFRAIKSIAVGFFYTFGQFILPGLAYAIPQWRWLQLTVSVPFLTFFLLSWWLPESIRWMVLSGKSSKALKTLRQVAIFNGKKEEGEKLSLEELKLNLQKEISLAKARHGIADLFRTPVLRRVTLCLSLAWFATGFAYYSLAMGVEEFGVNLYVLQLIFGGVDVPAKFITMLSISYLGRHITEGIVLLLAGGCILALIFVPLDLMTLRTVLAVFGKGCLSGSFSCLFLYTSELYPTVIRQTGMGASNLWARVGSMTAPLVKITGELQPFIPNIIFGTIALLGGSAALFLPETLNRPLPETIEDIETWSLRAKEPKPEPEAEKSSQRIPLQPCEPGPGPS.

The Cytoplasmic segment spans residues 1-21; sequence MTFAELVDRVGSKGPFQLLHT. Residues 22–42 form a helical membrane-spanning segment; sequence VLLGLPILGMANHNLLQIFTA. The Extracellular segment spans residues 43-124; it reads PTPAHHCRPP…LVCSSSKLKE (82 aa). N-linked (GlcNAc...) asparagine glycosylation is present at Asn81. A helical membrane pass occupies residues 125–145; it reads MAQSVFMAGILVGGLVLGALS. Topologically, residues 146-151 are cytoplasmic; the sequence is DRFGRK. The helical transmembrane segment at 152–172 threads the bilayer; the sequence is PILIFSYLLLGASGSGAAFSP. At 173–181 the chain is on the extracellular side; it reads TFSIYAVFR. Residues 182–202 form a helical membrane-spanning segment; that stretch reads FLCGFSISGISLSTAILNVEW. At 203 to 212 the chain is on the cytoplasmic side; the sequence is VSTRFRAIKS. Residues 213-233 traverse the membrane as a helical segment; the sequence is IAVGFFYTFGQFILPGLAYAI. Residues 234 to 237 lie on the Extracellular side of the membrane; the sequence is PQWR. The helical transmembrane segment at 238 to 258 threads the bilayer; sequence WLQLTVSVPFLTFFLLSWWLP. The Cytoplasmic portion of the chain corresponds to 259-328; that stretch reads ESIRWMVLSG…FRTPVLRRVT (70 aa). The chain crosses the membrane as a helical span at residues 329 to 349; that stretch reads LCLSLAWFATGFAYYSLAMGV. Over 350-355 the chain is Extracellular; it reads EEFGVN. Residues 356–376 traverse the membrane as a helical segment; sequence LYVLQLIFGGVDVPAKFITML. Residues 377–388 are Cytoplasmic-facing; the sequence is SISYLGRHITEG. The chain crosses the membrane as a helical span at residues 389–409; the sequence is IVLLLAGGCILALIFVPLDLM. The Extracellular segment spans residues 410–412; sequence TLR. A helical transmembrane segment spans residues 413-433; sequence TVLAVFGKGCLSGSFSCLFLY. The Cytoplasmic segment spans residues 434-472; that stretch reads TSELYPTVIRQTGMGASNLWARVGSMTAPLVKITGELQP. Residues 473-493 traverse the membrane as a helical segment; that stretch reads FIPNIIFGTIALLGGSAALFL. Over 494–543 the chain is Extracellular; it reads PETLNRPLPETIEDIETWSLRAKEPKPEPEAEKSSQRIPLQPCEPGPGPS. The disordered stretch occupies residues 513 to 543; it reads LRAKEPKPEPEAEKSSQRIPLQPCEPGPGPS. Basic and acidic residues predominate over residues 514-528; that stretch reads RAKEPKPEPEAEKSS.

The protein belongs to the major facilitator (TC 2.A.1) superfamily. Organic cation transporter (TC 2.A.1.19) family. Expressed in kidney.

The protein resides in the basolateral cell membrane. The catalysed reaction is estrone 3-sulfate(out) + glutarate(in) = estrone 3-sulfate(in) + glutarate(out). It carries out the reaction estrone 3-sulfate(in) + 2-oxoglutarate(out) = estrone 3-sulfate(out) + 2-oxoglutarate(in). It catalyses the reaction glutarate(in) + 2-oxoglutarate(out) = glutarate(out) + 2-oxoglutarate(in). The enzyme catalyses urate(in) + 2-oxoglutarate(out) = urate(out) + 2-oxoglutarate(in). The catalysed reaction is taurocholate(out) + glutarate(in) = taurocholate(in) + glutarate(out). It carries out the reaction dehydroepiandrosterone 3-sulfate(out) + glutarate(in) = dehydroepiandrosterone 3-sulfate(in) + glutarate(out). It catalyses the reaction prostaglandin F2alpha(out) + glutarate(in) = prostaglandin F2alpha(in) + glutarate(out). The enzyme catalyses prostaglandin F2alpha(out) + 2-oxoglutarate(in) = prostaglandin F2alpha(in) + 2-oxoglutarate(out). The catalysed reaction is (R)-carnitine(out) + 2-oxoglutarate(in) = (R)-carnitine(in) + 2-oxoglutarate(out). It carries out the reaction glutarate(in) + (R)-carnitine(out) = glutarate(out) + (R)-carnitine(in). It catalyses the reaction prostaglandin E2(out) + 2-oxoglutarate(in) = prostaglandin E2(in) + 2-oxoglutarate(out). The enzyme catalyses prostaglandin E2(out) + glutarate(in) = prostaglandin E2(in) + glutarate(out). The catalysed reaction is urate(in) + glutarate(out) = urate(out) + glutarate(in). It carries out the reaction taurocholate(out) + 2-oxoglutarate(in) = taurocholate(in) + 2-oxoglutarate(out). It catalyses the reaction dehydroepiandrosterone 3-sulfate(out) + 2-oxoglutarate(in) = dehydroepiandrosterone 3-sulfate(in) + 2-oxoglutarate(out). The enzyme catalyses kynurenate(out) + a dicarboxylate(in) = kynurenate(in) + a dicarboxylate(out). The catalysed reaction is (indol-3-yl)acetate(out) + a dicarboxylate(in) = (indol-3-yl)acetate(in) + a dicarboxylate(out). It carries out the reaction indoxyl sulfate(out) + a dicarboxylate(in) = indoxyl sulfate(in) + a dicarboxylate(out). It catalyses the reaction N-benzoylglycine(out) + a dicarboxylate(in) = N-benzoylglycine(in) + a dicarboxylate(out). The enzyme catalyses 3-carboxy-4-methyl-5-propyl-2-furanpropanoate(out) + a dicarboxylate(in) = 3-carboxy-4-methyl-5-propyl-2-furanpropanoate(in) + a dicarboxylate(out). The catalysed reaction is (6R)-L-erythro-5,6,7,8-tetrahydrobiopterin(out) + a dicarboxylate(in) = (6R)-L-erythro-5,6,7,8-tetrahydrobiopterin(in) + a dicarboxylate(out). It carries out the reaction L-erythro-7,8-dihydrobiopterin(out) + a dicarboxylate(in) = L-erythro-7,8-dihydrobiopterin(in) + a dicarboxylate(out). It catalyses the reaction L-sepiapterin(out) + a dicarboxylate(in) = L-sepiapterin(in) + a dicarboxylate(out). In terms of biological role, functions as an organic anion/dicarboxylate exchanger that couples organic anion uptake indirectly to the sodium gradient. Transports organic anions such as estrone 3-sulfate (E1S) and urate in exchange for dicarboxylates such as glutarate or ketoglutarate (2-oxoglutarate). Plays an important role in the excretion of endogenous and exogenous organic anions, especially from the kidney and the brain. E1S transport is pH- and chloride-dependent and may also involve E1S/cGMP exchange. Responsible for the transport of prostaglandin E2 (PGE2) and prostaglandin F2(alpha) (PGF2(alpha)) in the basolateral side of the renal tubule. Involved in the transport of neuroactive tryptophan metabolites kynurenate and xanthurenate. Functions as a biopterin transporters involved in the uptake and the secretion of coenzymes tetrahydrobiopterin (BH4), dihydrobiopterin (BH2) and sepiapterin to urine, thereby determining baseline levels of blood biopterins. May be involved in the basolateral transport of steviol, a metabolite of the popular sugar substitute stevioside. May participate in the detoxification/ renal excretion of drugs and xenobiotics, such as the histamine H(2)-receptor antagonists fexofenadine and cimetidine, the antibiotic benzylpenicillin (PCG), the anionic herbicide 2,4-dichloro-phenoxyacetate (2,4-D), the diagnostic agent p-aminohippurate (PAH), the antiviral acyclovir (ACV), and the mycotoxin ochratoxin (OTA), by transporting these exogenous organic anions across the cell membrane in exchange for dicarboxylates such as 2-oxoglutarate. Contributes to the renal uptake of potent uremic toxins (indoxyl sulfate (IS), indole acetate (IA), hippurate/N-benzoylglycine (HA) and 3-carboxy-4-methyl-5-propyl-2-furanpropionate (CMPF)), pravastatin, PCG, E1S and dehydroepiandrosterone sulfate (DHEAS), and is partly involved in the renal uptake of temocaprilat (an angiotensin-converting enzyme (ACE) inhibitor). May contribute to the release of cortisol in the adrenals. Involved in one of the detoxification systems on the choroid plexus (CP), removes substrates such as E1S or taurocholate (TC), PCG, 2,4-D and PAH, from the cerebrospinal fluid (CSF) to the blood for eventual excretion in urine and bile. Also contributes to the uptake of several other organic compounds such as the prostanoids prostaglandin E(2) and prostaglandin F(2-alpha), L-carnitine, and the therapeutic drugs allopurinol, 6-mercaptopurine (6-MP) and 5-fluorouracil (5-FU). Mediates the transport of PAH, PCG, and the statins pravastatin and pitavastatin, from the cerebrum into the blood circulation across the blood-brain barrier (BBB). In summary, plays a role in the efflux of drugs and xenobiotics, helping reduce their undesired toxicological effects on the body. The sequence is that of Organic anion transporter 3 (SLC22A8) from Sus scrofa (Pig).